A 244-amino-acid polypeptide reads, in one-letter code: HTH-type transcriptional regulator Cmr (244 aa).

Residue 41–160 (GSAPLHRDDV…RRWLSSVAQR (120 aa)) coordinates a nucleoside 3',5'-cyclic phosphate. In terms of domain architecture, HTH crp-type spans 174–237 (RPLPAQVAQL…YAVIEITDQH (64 aa)). The segment at residues 197-216 (QRTLAAMLGAQRPSINKILK) is a DNA-binding region (H-T-H motif).

Functionally, positively regulates the expression of at least groEL2. The chain is HTH-type transcriptional regulator Cmr (cmr) from Mycobacterium tuberculosis (strain CDC 1551 / Oshkosh).